A 351-amino-acid chain; its full sequence is MKEMINLDSSSEPSIVTKQFSVEECLSKLKEQHCYVPMRTIGRLRLRKSSDQTEKKCWKEKLMKIRSELEELWEQSMMYEEQKELTQLGEMLDRLWDKHINSEGSKSETISDTAISGNDDTMEKRLEQFSDDTLQDTLETEKNLNSKTSESLKSPTLSYPFDLDSLDKRIFKLESKIGYADEPLSELLNKCMEKLEIVEQDPQFWQSRIESWKQLLAKDFLKHHERNLCSIEKQTTLKNSSLKELCTEEDIVIMLEICSSQLPFVEQYMPILPLLLERLKSLQNMHTDAAEAISSWQGSKDVMMTMQSELNEWKNTVERLDHSKFYTQSVEEMRRLSDTVTQLEKRVLKLQ.

It is found in the cytoplasm. Required for correct meiotic chromosome segregation. This is Meiotically up-regulated gene 1 protein (mug1) from Schizosaccharomyces pombe (strain 972 / ATCC 24843) (Fission yeast).